The primary structure comprises 215 residues: Probable nicotinate-nucleotide adenylyltransferase (215 aa).

Belongs to the NadD family.

It carries out the reaction nicotinate beta-D-ribonucleotide + ATP + H(+) = deamido-NAD(+) + diphosphate. It participates in cofactor biosynthesis; NAD(+) biosynthesis; deamido-NAD(+) from nicotinate D-ribonucleotide: step 1/1. Its function is as follows. Catalyzes the reversible adenylation of nicotinate mononucleotide (NaMN) to nicotinic acid adenine dinucleotide (NaAD). The chain is Probable nicotinate-nucleotide adenylyltransferase from Fervidobacterium nodosum (strain ATCC 35602 / DSM 5306 / Rt17-B1).